The following is an 88-amino-acid chain: Putative septation protein SpoVG (88 aa).

Belongs to the SpoVG family.

Could be involved in septation. This Caldicellulosiruptor bescii (strain ATCC BAA-1888 / DSM 6725 / KCTC 15123 / Z-1320) (Anaerocellum thermophilum) protein is Putative septation protein SpoVG.